Reading from the N-terminus, the 436-residue chain is uncharacterized protein (436 aa).

The next 12 membrane-spanning stretches (helical) occupy residues 38–58, 70–90, 102–122, 125–145, 160–180, 197–217, 254–274, 291–311, 319–339, 342–362, 383–403, and 409–429; these read ILIFSQIFGGAGLGAGITVGA, VAGIPTALFTFGSAVAALLIG, LAGGFLIGGLGAIGVIIAALI, VALLFVSLLIYGAGMASNLQV, TAASMALVSTTLGAVVGPNLV, GPFIMSGAAFIIAGIILLIFL, IMVGAVIMILAQLIMTAIMTM, LVIGLHIAAMYLPSPLTGLLV, MAIASGATLLAAGLVAAIAPA, LSLLILALVLLGVGWNFGLLT, FDVLLALSGAAGGALSGMVVA, and ILSISGAVLSLLLIPVVIWYF.

This sequence belongs to the major facilitator superfamily.

The protein resides in the cell membrane. This is an uncharacterized protein from Bacillus subtilis (strain 168).